A 203-amino-acid polypeptide reads, in one-letter code: MPTRPQEPDRAASDPVEPVPEGAGRPPRGDLPQPGPPARPEATNGEPGPDAAGPAPAEDEYTTAIQELEDRWRRTLADLDNLRKRHARELERERAVERSRTAAAFLPVLDNLELALTHAGADPGAIVEGIRAVRDQAVNVLELLGYPRHAETGVAFDPARHEVVGVVQDPDAPPGTVVEVLRPGYGDGERQLRPAAVTVTKRE.

A compositionally biased stretch (basic and acidic residues) spans Met1–Ala12. Residues Met1–Ala64 are disordered. Over residues Gly45 to Pro56 the composition is skewed to low complexity.

It belongs to the GrpE family. In terms of assembly, homodimer.

Its subcellular location is the cytoplasm. Its function is as follows. Participates actively in the response to hyperosmotic and heat shock by preventing the aggregation of stress-denatured proteins, in association with DnaK and GrpE. It is the nucleotide exchange factor for DnaK and may function as a thermosensor. Unfolded proteins bind initially to DnaJ; upon interaction with the DnaJ-bound protein, DnaK hydrolyzes its bound ATP, resulting in the formation of a stable complex. GrpE releases ADP from DnaK; ATP binding to DnaK triggers the release of the substrate protein, thus completing the reaction cycle. Several rounds of ATP-dependent interactions between DnaJ, DnaK and GrpE are required for fully efficient folding. The chain is Protein GrpE 2 from Streptomyces avermitilis (strain ATCC 31267 / DSM 46492 / JCM 5070 / NBRC 14893 / NCIMB 12804 / NRRL 8165 / MA-4680).